A 199-amino-acid chain; its full sequence is Large ribosomal subunit protein bL17 (199 aa).

Positions 123–199 are disordered; that stretch reads DEANRARRAA…EESEAKDDTK (77 aa). Basic and acidic residues predominate over residues 137-152; that stretch reads KADERADEKADEKAEE. Residues 153 to 199 show a composition bias toward acidic residues; that stretch reads TVEETTEAPAEESTEAAAEETVEETTEAPAEESTEAAEESEAKDDTK.

The protein belongs to the bacterial ribosomal protein bL17 family. Part of the 50S ribosomal subunit. Contacts protein L32.

This Mycolicibacterium smegmatis (strain ATCC 700084 / mc(2)155) (Mycobacterium smegmatis) protein is Large ribosomal subunit protein bL17.